Here is a 246-residue protein sequence, read N- to C-terminus: Protein 3F (246 aa).

The signal sequence occupies residues 1–19 (MKLLSKLILTLALATYASA). Asparagine 52 carries an N-linked (GlcNAc...) asparagine glycan. Over residues 113-124 (EVRPIDRLKDNA) the composition is skewed to basic and acidic residues. Residues 113–223 (EVRPIDRLKD…EEAEHVEKGA (111 aa)) are disordered. A compositionally biased stretch (polar residues) spans 126–145 (AANTENAQKSPNTQSTQKGS). 3 consecutive repeat copies span residues 145–153 (SPKSDAKEA), 154–162 (SPKTDAKEA), and 163–171 (SPKSDAKEA). Positions 145–176 (SPKSDAKEASPKTDAKEASPKSDAKEASPKTD) are 3.5 X 9 AA tandem repeats of S-P-K-[ST]-D-A-K-E-A. Positions 146–177 (PKSDAKEASPKTDAKEASPKSDAKEASPKTDT) are enriched in basic and acidic residues. Residues 172–176 (SPKTD) form a 4; truncated repeat. Over residues 181 to 213 (SSPKTDTKSSTQKPSSSSDSSKAKAEANTAANN) the composition is skewed to low complexity.

This chain is Protein 3F (pspG), found in Dictyostelium discoideum (Social amoeba).